Consider the following 342-residue polypeptide: DNA-directed RNA polymerase subunit alpha (342 aa).

The segment at 1–238 (MESLNVNAKN…DQLNMFVNFD (238 aa)) is alpha N-terminal domain (alpha-NTD). The tract at residues 254-342 (FNKNLLRKVD…EMSKKLEEQI (89 aa)) is alpha C-terminal domain (alpha-CTD).

Belongs to the RNA polymerase alpha chain family. In terms of assembly, homodimer. The RNAP catalytic core consists of 2 alpha, 1 beta, 1 beta' and 1 omega subunit. When a sigma factor is associated with the core the holoenzyme is formed, which can initiate transcription.

The enzyme catalyses RNA(n) + a ribonucleoside 5'-triphosphate = RNA(n+1) + diphosphate. Its function is as follows. DNA-dependent RNA polymerase catalyzes the transcription of DNA into RNA using the four ribonucleoside triphosphates as substrates. The protein is DNA-directed RNA polymerase subunit alpha of Pelagibacter ubique (strain HTCC1062).